A 360-amino-acid chain; its full sequence is MSDIERLEQEICLALEAANDEQALEAVRIAALGKKGSISEKLKALGKMEASERQKAGPVLNGLKNRILELWAQKRDLLKRQAMDTRLSRETVDITLPVRSSPMERGRIHPISQVIEEIIAIYTKMGFSLAEGPDIETDYYNFTALNFPEGHPAREMHDTFFFDVDKIGERKLLRTHTSPVQIRTLEKQKAPIRIIIPGKTYRMDSDATHSPMFHQVEGLVIDKTSTIAHMMWLHETFCKEFFEVASVKMRFRPSFFPFTEPSMEVDIQCDRSGSEVKFGEGQDWLEILGCGMVHPHVLKNVGLDPDEYQGFAWGMGIDRIAMLKYGMPDLRAFFDADLRWLDHYGFRCFDMPAFFPNRNV.

Glutamate 260 contributes to the Mg(2+) binding site.

It belongs to the class-II aminoacyl-tRNA synthetase family. Phe-tRNA synthetase alpha subunit type 1 subfamily. As to quaternary structure, tetramer of two alpha and two beta subunits. Mg(2+) is required as a cofactor.

The protein localises to the cytoplasm. The catalysed reaction is tRNA(Phe) + L-phenylalanine + ATP = L-phenylalanyl-tRNA(Phe) + AMP + diphosphate + H(+). The protein is Phenylalanine--tRNA ligase alpha subunit of Bartonella tribocorum (strain CIP 105476 / IBS 506).